Consider the following 88-residue polypeptide: Exodeoxyribonuclease 7 small subunit (88 aa).

Residues 69 to 88 (DPMHPDDGEPFDPSLVSTSQ) are disordered.

It belongs to the XseB family. In terms of assembly, heterooligomer composed of large and small subunits.

The protein localises to the cytoplasm. The catalysed reaction is Exonucleolytic cleavage in either 5'- to 3'- or 3'- to 5'-direction to yield nucleoside 5'-phosphates.. Its function is as follows. Bidirectionally degrades single-stranded DNA into large acid-insoluble oligonucleotides, which are then degraded further into small acid-soluble oligonucleotides. This is Exodeoxyribonuclease 7 small subunit from Xylella fastidiosa (strain M23).